We begin with the raw amino-acid sequence, 462 residues long: Dipeptidyl peptidase 1 (462 aa).

The signal sequence occupies residues 1–24 (MGPWTHSLRAALLLVLLGVCTVSS). 2 N-linked (GlcNAc...) asparagine glycosylation sites follow: N29 and N53. 2 disulfide bridges follow: C30–C118 and C54–C136. Positions 135–229 (ACFVGKKMAN…TDEIQQQILS (95 aa)) are excised as a propeptide. N-linked (GlcNAc...) asparagine glycosylation is present at N144. 3 disulfide bridges follow: C254–C297, C290–C330, and C320–C336. C257 is a catalytic residue. N275 carries an N-linked (GlcNAc...) asparagine glycan. Chloride-binding residues include F301 and Y303. Chloride is bound at residue Y346. Active-site residues include H404 and N426.

The protein belongs to the peptidase C1 family. In terms of assembly, tetramer of heterotrimers consisting of exclusion domain, heavy- and light chains. Chloride is required as a cofactor. Broadly distributed, but higher levels found in liver, spleen, intestine, lung and kidney.

It is found in the lysosome. It catalyses the reaction Release of an N-terminal dipeptide, Xaa-Yaa-|-Zaa-, except when Xaa is Arg or Lys, or Yaa or Zaa is Pro.. Its function is as follows. Thiol protease. Has dipeptidylpeptidase activity. Active against a broad range of dipeptide substrates composed of both polar and hydrophobic amino acids. Proline cannot occupy the P1 position and arginine cannot occupy the P2 position of the substrate. Can act as both an exopeptidase and endopeptidase. Activates serine proteases such as elastase, cathepsin G and granzymes A and B. The protein is Dipeptidyl peptidase 1 (Ctsc) of Rattus norvegicus (Rat).